Reading from the N-terminus, the 742-residue chain is Alginate lyase (742 aa).

An N-terminal signal peptide occupies residues 1 to 26; it reads MRLQPLFVSLALAAPCALLPTASLSA. Substrate contacts are provided by residues R143, 153–156, Q204, H208, and 263–266; these read QVLN and YYQR. The active-site Proton donor is Y264. Residue H418 is the Proton acceptor of the active site. Positions 420 and 438 each coordinate Zn(2+). Residue R443 coordinates substrate. H469 contacts Zn(2+). E669 is a substrate binding site.

Belongs to the polysaccharide lyase 17 family. As to quaternary structure, homodimer. The cofactor is Zn(2+).

It localises to the periplasm. The enzyme catalyses Cleavage of 4-deoxy-alpha-L-erythro-hex-4-enopyranuronoside oligosaccharides into 4-deoxy-alpha-L-erythro-hex-4-enopyranuronate monosaccharides.. Functionally, polysaccharide lyase that catalyzes the depolymerization of alginate via a beta-elimination mechanism, cleaving the beta-1,4 glycosidic bond between two adjacent sugar residues. Acts specifically on alginate and each of its block structures, with highest activity toward poly-beta-D-mannuronate (poly-ManA). Shows an exolytic mode of action, producing unsaturated monomers. Displays a very low activity against poly-beta-D-glucuronate (poly-GlcA), and is not active on poly-alpha-D-galacturonate, hyaluronan, heparin, heparan sulfate and chondroitin sulfate. This is Alginate lyase from Stenotrophomonas maltophilia (strain K279a).